Consider the following 82-residue polypeptide: Small ribosomal subunit protein uS17 (82 aa).

It belongs to the universal ribosomal protein uS17 family. As to quaternary structure, part of the 30S ribosomal subunit.

Functionally, one of the primary rRNA binding proteins, it binds specifically to the 5'-end of 16S ribosomal RNA. This is Small ribosomal subunit protein uS17 from Rhodopseudomonas palustris (strain TIE-1).